The sequence spans 332 residues: Anthranilate phosphoribosyltransferase (332 aa).

5-phospho-alpha-D-ribose 1-diphosphate is bound by residues glycine 79, 82–83, serine 87, 89–92, 107–115, and serine 119; these read GD, NIST, and KHGNRSVSS. Anthranilate is bound at residue glycine 79. Position 91 (serine 91) interacts with Mg(2+). Asparagine 110 contributes to the anthranilate binding site. Arginine 165 contacts anthranilate. Aspartate 223 and glutamate 224 together coordinate Mg(2+).

It belongs to the anthranilate phosphoribosyltransferase family. As to quaternary structure, homodimer. It depends on Mg(2+) as a cofactor.

It catalyses the reaction N-(5-phospho-beta-D-ribosyl)anthranilate + diphosphate = 5-phospho-alpha-D-ribose 1-diphosphate + anthranilate. Its pathway is amino-acid biosynthesis; L-tryptophan biosynthesis; L-tryptophan from chorismate: step 2/5. Its function is as follows. Catalyzes the transfer of the phosphoribosyl group of 5-phosphorylribose-1-pyrophosphate (PRPP) to anthranilate to yield N-(5'-phosphoribosyl)-anthranilate (PRA). This Serratia proteamaculans (strain 568) protein is Anthranilate phosphoribosyltransferase.